We begin with the raw amino-acid sequence, 452 residues long: Glutamyl-tRNA(Gln) amidotransferase subunit A (452 aa).

Residues Lys-56 and Ser-131 each act as charge relay system in the active site. Catalysis depends on Ser-155, which acts as the Acyl-ester intermediate.

Belongs to the amidase family. GatA subfamily. In terms of assembly, heterotrimer of A, B and C subunits.

It catalyses the reaction L-glutamyl-tRNA(Gln) + L-glutamine + ATP + H2O = L-glutaminyl-tRNA(Gln) + L-glutamate + ADP + phosphate + H(+). Its function is as follows. Allows the formation of correctly charged Gln-tRNA(Gln) through the transamidation of misacylated Glu-tRNA(Gln) in organisms which lack glutaminyl-tRNA synthetase. The reaction takes place in the presence of glutamine and ATP through an activated gamma-phospho-Glu-tRNA(Gln). The sequence is that of Glutamyl-tRNA(Gln) amidotransferase subunit A from Campylobacter hominis (strain ATCC BAA-381 / DSM 21671 / CCUG 45161 / LMG 19568 / NCTC 13146 / CH001A).